Reading from the N-terminus, the 557-residue chain is Arginine--tRNA ligase (557 aa).

Residues 132-142 (ANPTGDLHLGH) carry the 'HIGH' region motif.

Belongs to the class-I aminoacyl-tRNA synthetase family. Monomer.

It localises to the cytoplasm. It catalyses the reaction tRNA(Arg) + L-arginine + ATP = L-arginyl-tRNA(Arg) + AMP + diphosphate. The chain is Arginine--tRNA ligase from Geobacillus kaustophilus (strain HTA426).